A 194-amino-acid polypeptide reads, in one-letter code: Probable DNA-directed RNA polymerase subunit delta (194 aa).

Residues 14–83 (LSMIEVARAI…GENKWGLRSW (70 aa)) form the HTH HARE-type domain. Positions 117–194 (GDEDAIDYSD…SDDEEDEEGE (78 aa)) are disordered.

This sequence belongs to the RpoE family. As to quaternary structure, RNAP is composed of a core of 2 alpha, a beta and a beta' subunits. The core is associated with a delta subunit and one of several sigma factors.

Functionally, participates in both the initiation and recycling phases of transcription. In the presence of the delta subunit, RNAP displays an increased specificity of transcription, a decreased affinity for nucleic acids, and an increased efficiency of RNA synthesis because of enhanced recycling. The polypeptide is Probable DNA-directed RNA polymerase subunit delta (Streptococcus mutans serotype c (strain ATCC 700610 / UA159)).